A 338-amino-acid polypeptide reads, in one-letter code: Glycerol-3-phosphate dehydrogenase [NAD(P)+] (338 aa).

Serine 14, tyrosine 15, histidine 35, and lysine 109 together coordinate NADPH. Residues lysine 109, glycine 138, and threonine 140 each contribute to the sn-glycerol 3-phosphate site. NADPH is bound at residue alanine 142. Residues lysine 194, aspartate 247, serine 257, arginine 258, and asparagine 259 each coordinate sn-glycerol 3-phosphate. The active-site Proton acceptor is the lysine 194. Arginine 258 contacts NADPH. NADPH contacts are provided by valine 282 and glutamate 284.

The protein belongs to the NAD-dependent glycerol-3-phosphate dehydrogenase family.

It is found in the cytoplasm. It carries out the reaction sn-glycerol 3-phosphate + NAD(+) = dihydroxyacetone phosphate + NADH + H(+). The enzyme catalyses sn-glycerol 3-phosphate + NADP(+) = dihydroxyacetone phosphate + NADPH + H(+). It functions in the pathway membrane lipid metabolism; glycerophospholipid metabolism. Catalyzes the reduction of the glycolytic intermediate dihydroxyacetone phosphate (DHAP) to sn-glycerol 3-phosphate (G3P), the key precursor for phospholipid synthesis. This is Glycerol-3-phosphate dehydrogenase [NAD(P)+] from Shewanella sp. (strain MR-4).